The following is a 534-amino-acid chain: Cytochrome P450 78A9 (534 aa).

Residues 26-46 form a helical membrane-spanning segment; sequence LALSLLVASLASLALSLFFWS. C474 is a binding site for heme.

It belongs to the cytochrome P450 family. Heme serves as cofactor. Expressed in the funiculus of developing ovules.

It localises to the membrane. Its function is as follows. Plays a role in seed and fruit development. Functions probably in association with CYP78A6 in the regulation of seed growth. The sequence is that of Cytochrome P450 78A9 (CYP78A9) from Arabidopsis thaliana (Mouse-ear cress).